Consider the following 154-residue polypeptide: Endoribonuclease YbeY (154 aa).

Zn(2+)-binding residues include His-114, His-118, and His-124.

It belongs to the endoribonuclease YbeY family. It depends on Zn(2+) as a cofactor.

The protein resides in the cytoplasm. Single strand-specific metallo-endoribonuclease involved in late-stage 70S ribosome quality control and in maturation of the 3' terminus of the 16S rRNA. This chain is Endoribonuclease YbeY, found in Marinomonas sp. (strain MWYL1).